The primary structure comprises 286 residues: Undecaprenyl-diphosphatase (286 aa).

7 helical membrane passes run 43 to 63, 91 to 111, 118 to 138, 150 to 170, 189 to 209, 236 to 256, and 264 to 284; these read FWKMFSIVIQLGAILCLPIYF, LTIIAFLCTAIPAFLFTKIIG, IIMGSALLIGGIVMWIVDVMF, MSVGQAIWIGLCQVLSAVFPG, AAALEFSFFLSIPTMVVATCY, ITLAIGFIVSFIVAYFVVAWF, and GFVPFAVYRIVVGIAVLAWAL.

It belongs to the UppP family.

It localises to the cell inner membrane. The enzyme catalyses di-trans,octa-cis-undecaprenyl diphosphate + H2O = di-trans,octa-cis-undecaprenyl phosphate + phosphate + H(+). Its function is as follows. Catalyzes the dephosphorylation of undecaprenyl diphosphate (UPP). Confers resistance to bacitracin. The sequence is that of Undecaprenyl-diphosphatase from Koribacter versatilis (strain Ellin345).